We begin with the raw amino-acid sequence, 257 residues long: 8-demethyl-8-aminoriboflavin-5'-phosphate synthase (257 aa).

Residues 11 to 13, 19 to 21, 91 to 94, 132 to 136, and Y240 contribute to the FMN site; these read TLR, SQT, ITLN, and CGNED.

This sequence belongs to the SsuE family. In terms of assembly, homotetramer.

The catalysed reaction is FMN + L-glutamate + 3 A + O2 + H2O = 8-amino-8-demethylriboflavin 5'-phosphate + 2-oxoglutarate + 3 AH2 + CO2 + H(+). The protein operates within antibiotic biosynthesis. In terms of biological role, involved in the biosynthesis of the riboflavin analog antibiotic roseoflavin (3,8-dimethylamino-riboflavin). Catalyzes the site-specific substitution of the C-8 methyl group of riboflavin-5'-phosphate (FMN) by an amino group to yield 8-amino-8-demethylriboflavin 5'-phosphate, via a combined oxidation, decarboxylation and transamination reaction. The catalysis is initiated by an oxidation step in which the C-8 methyl group on the dimethylbenzene ring of FMN is converted to a formyl group to yield the 8-demethyl-8-formylriboflavin-5'-phosphate (OHC-RP) intermediate. In the presence of thiamine, the formyl group is oxidized into a carboxyl group to yield the 8-demethyl-8-carboxyriboflavin-5'-phosphate (HO2C-RP) intermediate. Finally, in the presence of L-glutamate as an amino donor, decarboxylation and aminotransfer occur, resulting in production of 8-demethyl-8-aminoriboflavin-5'-phosphate. Addition of NAD (but not NADP) to the reaction increases the yield 1.7-fold. The reaction also proceeds without the addition of any electron acceptor, and it is possible that molecular oxygen serves this role. This is 8-demethyl-8-aminoriboflavin-5'-phosphate synthase from Streptomyces davaonensis (strain DSM 101723 / JCM 4913 / KCC S-0913 / 768).